Reading from the N-terminus, the 425-residue chain is Serine hydroxymethyltransferase (425 aa).

Residues L128 and 132-134 (GHL) each bind (6S)-5,6,7,8-tetrahydrofolate. Position 237 is an N6-(pyridoxal phosphate)lysine (K237).

This sequence belongs to the SHMT family. Homodimer. Pyridoxal 5'-phosphate serves as cofactor.

Its subcellular location is the cytoplasm. It carries out the reaction (6R)-5,10-methylene-5,6,7,8-tetrahydrofolate + glycine + H2O = (6S)-5,6,7,8-tetrahydrofolate + L-serine. Its pathway is one-carbon metabolism; tetrahydrofolate interconversion. The protein operates within amino-acid biosynthesis; glycine biosynthesis; glycine from L-serine: step 1/1. In terms of biological role, catalyzes the reversible interconversion of serine and glycine with tetrahydrofolate (THF) serving as the one-carbon carrier. This reaction serves as the major source of one-carbon groups required for the biosynthesis of purines, thymidylate, methionine, and other important biomolecules. Also exhibits THF-independent aldolase activity toward beta-hydroxyamino acids, producing glycine and aldehydes, via a retro-aldol mechanism. In Wolbachia pipientis wMel, this protein is Serine hydroxymethyltransferase.